The chain runs to 404 residues: Histidinol dehydrogenase (404 aa).

Residues Tyr114, Gln176, and Asn199 each coordinate NAD(+). Substrate contacts are provided by Ser222, Gln244, and His247. Zn(2+) contacts are provided by Gln244 and His247. Catalysis depends on proton acceptor residues Glu300 and His301. Residues His301, Asp334, Glu388, and His393 each coordinate substrate. Asp334 is a Zn(2+) binding site. His393 provides a ligand contact to Zn(2+).

It belongs to the histidinol dehydrogenase family. Requires Zn(2+) as cofactor.

The enzyme catalyses L-histidinol + 2 NAD(+) + H2O = L-histidine + 2 NADH + 3 H(+). It participates in amino-acid biosynthesis; L-histidine biosynthesis; L-histidine from 5-phospho-alpha-D-ribose 1-diphosphate: step 9/9. In terms of biological role, catalyzes the sequential NAD-dependent oxidations of L-histidinol to L-histidinaldehyde and then to L-histidine. This is Histidinol dehydrogenase (hisD) from Archaeoglobus fulgidus (strain ATCC 49558 / DSM 4304 / JCM 9628 / NBRC 100126 / VC-16).